Consider the following 178-residue polypeptide: MTEIPSSFVLPDPEWIYRVGIGQDSHRFLPDEDPKPCILGGIIFENTPGFEANSDGDVVFHAICNAFSSVTHKGILGGLADELLKTKGITDSVVYLQEAVASLKPTQRVSHLAITIEGKRPKLLPQLPSMRKRIAEVLHIPLDSINITATSGEGLTAMGQGYGVQCFCVLTIMEYCRY.

3 residues coordinate a divalent metal cation: Asp24, His26, and His61. 24-26 contributes to the 4-CDP-2-C-methyl-D-erythritol 2-phosphate binding site; it reads DSH. 150–153 is a 4-CDP-2-C-methyl-D-erythritol 2-phosphate binding site; that stretch reads TSGE.

This sequence belongs to the IspF family. Homotrimer. A divalent metal cation is required as a cofactor.

It carries out the reaction 4-CDP-2-C-methyl-D-erythritol 2-phosphate = 2-C-methyl-D-erythritol 2,4-cyclic diphosphate + CMP. Its pathway is isoprenoid biosynthesis; isopentenyl diphosphate biosynthesis via DXP pathway; isopentenyl diphosphate from 1-deoxy-D-xylulose 5-phosphate: step 4/6. Involved in the biosynthesis of isopentenyl diphosphate (IPP) and dimethylallyl diphosphate (DMAPP), two major building blocks of isoprenoid compounds. Catalyzes the conversion of 4-diphosphocytidyl-2-C-methyl-D-erythritol 2-phosphate (CDP-ME2P) to 2-C-methyl-D-erythritol 2,4-cyclodiphosphate (ME-CPP) with a corresponding release of cytidine 5-monophosphate (CMP). The polypeptide is 2-C-methyl-D-erythritol 2,4-cyclodiphosphate synthase (Chlamydia trachomatis serovar L2 (strain ATCC VR-902B / DSM 19102 / 434/Bu)).